Here is a 490-residue protein sequence, read N- to C-terminus: Sphingomyelinase (490 aa).

The signal sequence occupies residues 1 to 31 (MDYAKRIGQVGALAVVLGVGAAVTTHAIGSA). The tract at residues 30–49 (SAAPTDPSSSSTDSPVDACS) is disordered. At 32–136 (APTDPSSSST…FDACDPDGNR (105 aa)) the chain is on the periplasmic side. The beta stranded transmembrane segment at 137 to 145 (MTFAVRERG) threads the bilayer. Topologically, residues 146 to 161 (APGGPQHGIVTVDQRT) are extracellular. Residues 162-168 (ASFIYTA) traverse the membrane as a beta stranded segment. Residues 169-171 (DPG) are Periplasmic-facing. The beta stranded transmembrane segment at 172–182 (FVGTDTFSVNV) threads the bilayer. At 183–187 (SDDTS) the chain is on the extracellular side. Residues 188 to 196 (LHVHGLAGY) traverse the membrane as a beta stranded segment. At 197–204 (LGPFHGHD) the chain is on the periplasmic side. The beta stranded transmembrane segment at 205-213 (DVATVTVFV) threads the bilayer. Residues 214–490 (GNTPTDTISG…HYVADNVAVR (277 aa)) lie on the Extracellular side of the membrane.

Belongs to the SpmT family.

Its subcellular location is the cell outer membrane. It carries out the reaction a sphingomyelin + H2O = phosphocholine + an N-acylsphing-4-enine + H(+). In terms of biological role, catalyzes the cleavage of sphingomyelin, a major lipid in eukaryotic cells, into ceramide and phosphocholine, which are then utilized by M.bovis as carbon, nitrogen and phosphorus sources, respectively. Thus, enables M.bovis to utilize sphingomyelin as a source of several essential nutrients for intracellular growth during infection. Furthermore, lyses erythrocytes and constitutes a hemolytic factor. This is Sphingomyelinase from Mycobacterium bovis (strain ATCC BAA-935 / AF2122/97).